A 394-amino-acid chain; its full sequence is Chalcone synthase 4 (394 aa).

Cys-165 is a catalytic residue.

The protein belongs to the thiolase-like superfamily. Chalcone/stilbene synthases family.

It carries out the reaction (E)-4-coumaroyl-CoA + 3 malonyl-CoA + 3 H(+) = 2',4,4',6'-tetrahydroxychalcone + 3 CO2 + 4 CoA. It functions in the pathway secondary metabolite biosynthesis; flavonoid biosynthesis. The primary product of this enzyme is 4,2',4',6'-tetrahydroxychalcone (also termed naringenin-chalcone or chalcone) which can under specific conditions spontaneously isomerize into naringenin. The sequence is that of Chalcone synthase 4 (CHS4) from Bromheadia finlaysoniana (Orchid).